Consider the following 101-residue polypeptide: MNLERVSNEEKLNLCRKYYLGGFAFLPFLWLVNIFWFFREAFIVPAYTEQSQIKGYVWRSAVGFFLWVIVLSTWITIFQIYRPRWGALGDYLSFTIPLGTP.

The Cytoplasmic portion of the chain corresponds to 1-17; that stretch reads MNLERVSNEEKLNLCRK. An intramembrane region (helical) is located at residues 18 to 36; it reads YYLGGFAFLPFLWLVNIFW. Over 37 to 57 the chain is Cytoplasmic; the sequence is FFREAFIVPAYTEQSQIKGYV. Residues 58 to 78 traverse the membrane as a helical segment; sequence WRSAVGFFLWVIVLSTWITIF. Residues 79–101 are Lumenal-facing; it reads QIYRPRWGALGDYLSFTIPLGTP.

It belongs to the PEN-2 family. The functional gamma-secretase complex is composed of at least four polypeptides: a presenilin homodimer (PSEN1 or PSEN2), nicastrin (NCSTN), APH1 (APH1A or APH1B) and PSENEN.

Its subcellular location is the endoplasmic reticulum membrane. It is found in the golgi apparatus. The protein resides in the golgi stack membrane. It localises to the cell membrane. The protein localises to the membrane. Its function is as follows. Essential subunit of the gamma-secretase complex, an endoprotease complex that catalyzes the intramembrane cleavage of integral membrane proteins such as Notch receptors and APP (amyloid-beta precursor protein). The gamma-secretase complex plays a role in Notch and Wnt signaling cascades and regulation of downstream processes via its role in processing key regulatory proteins, and by regulating cytosolic CTNNB1 levels. PSENEN modulates both endoproteolysis of presenilin and gamma-secretase activity. The sequence is that of Gamma-secretase subunit PEN-2 (PSENEN) from Bos taurus (Bovine).